The chain runs to 1067 residues: MNLQPITDLLKALNSGNTTTIQQAEQLYADYKNHQPDQLVNSFIVLIRTSQDELLRSYPPVLLRTLVNGNDSGNILKGLKPETLVTLKTELMFAVREEPKNHIRHSILNVIAILAIQLVPEQKWPEILSFIIESSSSPEENLRESSFYLIGAIIDDSRVAETLAPHFDKFALLVEKGLNDPSAKVQVSALETVSTFIDANPEKAEVFKPLIPAMLNTIQKTIESNLEKEAQKGILTFIIIAQYHSDWFKTNFDMIFKVFFQFLEHQSLEDETKHACLHFFLTFAEFKSSIMKKKLYLEPIVLLLLKWMSSVEDMDLKDWNSLDTEPSDDDDSNVAFEAIEALSHCVSKGLWEFFLQCAPTLLNSGNWKERYTGLMTLSSISEGCEKQIKTNFKLIIQSILPLANDSHPRVRFAFFYCLGSFASYLKREMQDLYKTLIPVSLEHLNDPFPRVTISNCEFLTLFLDEIKPNRVKEFKDQFLGRLSPLLQNENYKIVQHSLNAFSSVVDGIGEEFTQHYSEIMPFLIKILRTQTSVETKTLRGRAIETISLVGLAVGKKVFLNDCIQIIQYVSSLEKFKDDDPQVDFFLRAFTRFAQCLGEDFIPYLKYSMSPLMDAINGKVDSSVENGEDFSDESNNSGSIVMENKAMALEMVSIYAMELKHHLFPYVEQLYKGSIELVDFPFSSLVAIQAVNLIPFLVKISKQHFEAVGGLKDGMKAEFTSRLFLDSYERMAASIKTESEPDTLSAKLKALSDLMDIGGQCEQADRILSLTFEVANESFGTLQELETEYQENIDEEDEDADESPEREIIDDAYNSLAMVLGEVCIQFKEKAVPYIATVLPAMIELIETAPSVEIKTSMICILDDLIENGGQKAFELYPHIIKPMMNCTLPNLDPSLIQSAVFGIGLAAENGKDYFTPFLMESLQLINNVIVSVNSVQEQDDDLIAARDNAISAMGRIITNLPQHLGNNFPQTIALWLSYLPIQDDGEAGSIIKSLCTLIRDFSQQIMTQQYIVKVLEIIAVGLHKKAVNPDDKQIISLALRSQESLVAQSLFQLSAENQAILANFFKN.

HEAT repeat units lie at residues 3–34, 42–75, 93–120, 125–152, 164–197, 206–243, 251–286, 295–347, 349–381, 385–425, 427–466, 468–508, 510–553, 555–596, 598–658, 661–703, 718–757, 763–826, 832–869, 876–909, 917–960, 969–999, 1008–1040, and 1041–1064; these read LQPITDLLKALNSGNTTTIQQAEQLYADYKNH, SFIVLIRTSQDELLRSYPPVLLRTLVNGNDSGNI, FAVREEPKNHIRHSILNVIAILAIQLVP, PEILSFIIESSSSPEENLRESSFYLIGA, APHFDKFALLVEKGLNDPSAKVQVSALETVSTFI, VFKPLIPAMLNTIQKTIESNLEKEAQKGILTFIIIAQY, NFDMIFKVFFQFLEHQSLEDETKHACLHFFLTFAEF, LYLE…HCVS, GLWEFFLQCAPTLLNSGNWKERYTGLMTLSSIS, EKQI…ASYL, REMQDLYKTLIPVSLEHLNDPFPRVTISNCEFLTLFLDEI, PNRV…VDGI, EEFT…GLAV, KKVF…AQCL, EDFI…AMEL, HLFP…SKQH, FTSRLFLDSYERMAASIKTESEPDTLSAKLKALSDLMDIG, ADRI…CIQF, PYIATVLPAMIELIETAPSVEIKTSMICILDDLIENGG, YPHIIKPMMNCTLPNLDPSLIQSAVFGIGLAAEN, FLME…ITNL, PQTIALWLSYLPIQDDGEAGSIIKSLCTLIR, QQYIVKVLEIIAVGLHKKAVNPDDKQIISLALR, and SQESLVAQSLFQLSAENQAILANF.

Belongs to the importin beta family. Importin beta-3 subfamily.

Its subcellular location is the cytoplasm. The protein resides in the nucleus. Its function is as follows. Functions in nuclear protein import as nuclear transport receptor. Serves as receptor for nuclear localization signals (NLS) in cargo substrates. The chain is Probable importin-5 homolog from Dictyostelium discoideum (Social amoeba).